The primary structure comprises 342 residues: NADPH-dependent methylglyoxal reductase GRE2 (342 aa).

NADP(+) is bound by residues 7-12 (GANGFI), arginine 32, lysine 36, 57-58 (DI), tyrosine 165, lysine 169, valine 199, and serine 216. Residue lysine 169 is the Proton donor of the active site. A Phosphoserine modification is found at serine 333.

It belongs to the NAD(P)-dependent epimerase/dehydratase family. Dihydroflavonol-4-reductase subfamily. In terms of assembly, monomer. Post-translationally, the N-terminus is blocked.

The protein resides in the cytoplasm. The protein localises to the nucleus. It carries out the reaction (S)-lactaldehyde + NADP(+) = methylglyoxal + NADPH + H(+). The enzyme catalyses 3-methylbutanol + NADP(+) = 3-methylbutanal + NADPH + H(+). The catalysed reaction is 2,5-hexanedione + 2 NADPH + 2 H(+) = (2S,5S)-hexanediol + 2 NADP(+). It catalyses the reaction (S)-3-chloro-1-phenyl-1-propanol + NADP(+) = 3-chloro-1-phenyl-1-propanone + NADPH + H(+). Its activity is regulated as follows. Activated by glutathione. In terms of biological role, catalyzes the irreversible reduction of the cytotoxic compound methylglyoxal (MG, 2-oxopropanal) to (S)-lactaldehyde as an alternative to detoxification of MG by glyoxalase I GLO1. MG is synthesized via a bypath of glycolysis from dihydroxyacetone phosphate and is believed to play a role in cell cycle regulation and stress adaptation. Also catalyzes the reduction of 3-methylbutanal to 3-methylbutanol. Acts as a suppressor of 3-methylbutanol-induced filamentation by modulating the levels of 3-methylbutanal, the signal to which cells respond by filamentation. Also involved in ergosterol metabolism. The sequence is that of NADPH-dependent methylglyoxal reductase GRE2 (GRE2) from Saccharomyces cerevisiae (strain ATCC 204508 / S288c) (Baker's yeast).